Here is a 208-residue protein sequence, read N- to C-terminus: FMRFamide-like neuropeptide 18 (208 aa).

The first 21 residues, 1-21, serve as a signal peptide directing secretion; the sequence is MQRWSGVLLISLCCLLRGALA. A propeptide spanning residues 22 to 83 is cleaved from the precursor; the sequence is YTEPIYEIVE…VWEKRESSVQ (62 aa). A Phenylalanine amide modification is found at Phe93. Positions 97-101 are excised as a propeptide; that stretch reads AYFDE. Phe111 is subject to Phenylalanine amide. A propeptide spanning residues 115–119 is cleaved from the precursor; the sequence is SYFDE. Phe129 is subject to Phenylalanine amide. A propeptide spanning residues 133-137 is cleaved from the precursor; sequence DVPMD. At Phe147 the chain carries Phenylalanine amide. Positions 151–158 are excised as a propeptide; that stretch reads DYMADSFD. A phenylalanine amide mark is found at Phe169 and Phe180. Residues 184–195 constitute a propeptide that is removed on maturation; that stretch reads SDLEEHYAGVLL. Phenylalanine amide is present on Phe205.

It belongs to the FARP (FMRFamide related peptide) family. May be processed by convertase egl-3. As to expression, expressed in head neurons and weakly in ventral nerve cord. Expressed in the interneurons AVA, AIY and RIG, the motor neuron RIM and the pharyngeal neurons M2 and M3. EMPGVLRF-amide: Expressed in cholinergic pharyngeal motoneurons M2 and M3.

It localises to the secreted. Its function is as follows. FMRFamide-like neuropeptides. Ligand to G-protein coupled receptor npr-1. Involved in modulating locomotion quiescence during the sleep-like state called lethargus which occurs during molting between larval and adult stages, acting via npr-1. Together with flp-1, plays a homeostatic role by acting on the GABAergic neural transmission at neuromuscular junctions to prevent overexcitation of the locomotor circuit. Plays a role in the navigational capacity of sperm and the targeting of sperm derived from males to the fertilization site in the uterus of hermaphrodites. SVPGVLRF-amide: Excites muscle tension. In terms of biological role, activates the G-protein coupled receptor npr-1 more effectively than other flp-18 peptides. Inhibits the activity of dissected pharyngeal myogenic muscle system. This is FMRFamide-like neuropeptide 18 from Caenorhabditis elegans.